Reading from the N-terminus, the 429-residue chain is Bifunctional protein GlmU (429 aa).

The segment at 1–223 (MKISVLILAA…EQDFMGVNDK (223 aa)) is pyrophosphorylase. UDP-N-acetyl-alpha-D-glucosamine contacts are provided by residues 8–11 (LAAG), Lys-22, Gln-74, and 81–82 (GT). Asp-102 is a binding site for Mg(2+). 4 residues coordinate UDP-N-acetyl-alpha-D-glucosamine: Gly-135, Glu-149, Asn-164, and Asn-221. Asn-221 is a Mg(2+) binding site. Residues 224–244 (IELCLAQDLMQEAIKKEWMKQ) form a linker region. An N-acetyltransferase region spans residues 245–429 (GVIFHMPATT…KDYFYTKFKK (185 aa)). The UDP-N-acetyl-alpha-D-glucosamine site is built by Arg-308 and Lys-325. The Proton acceptor role is filled by His-336. Positions 339 and 350 each coordinate UDP-N-acetyl-alpha-D-glucosamine. Acetyl-CoA is bound by residues 359–360 (NY), Ser-378, Ala-396, and Arg-413.

In the N-terminal section; belongs to the N-acetylglucosamine-1-phosphate uridyltransferase family. It in the C-terminal section; belongs to the transferase hexapeptide repeat family. As to quaternary structure, homotrimer. Mg(2+) serves as cofactor.

The protein resides in the cytoplasm. The enzyme catalyses alpha-D-glucosamine 1-phosphate + acetyl-CoA = N-acetyl-alpha-D-glucosamine 1-phosphate + CoA + H(+). The catalysed reaction is N-acetyl-alpha-D-glucosamine 1-phosphate + UTP + H(+) = UDP-N-acetyl-alpha-D-glucosamine + diphosphate. It functions in the pathway nucleotide-sugar biosynthesis; UDP-N-acetyl-alpha-D-glucosamine biosynthesis; N-acetyl-alpha-D-glucosamine 1-phosphate from alpha-D-glucosamine 6-phosphate (route II): step 2/2. The protein operates within nucleotide-sugar biosynthesis; UDP-N-acetyl-alpha-D-glucosamine biosynthesis; UDP-N-acetyl-alpha-D-glucosamine from N-acetyl-alpha-D-glucosamine 1-phosphate: step 1/1. Its pathway is bacterial outer membrane biogenesis; LPS lipid A biosynthesis. Its function is as follows. Catalyzes the last two sequential reactions in the de novo biosynthetic pathway for UDP-N-acetylglucosamine (UDP-GlcNAc). The C-terminal domain catalyzes the transfer of acetyl group from acetyl coenzyme A to glucosamine-1-phosphate (GlcN-1-P) to produce N-acetylglucosamine-1-phosphate (GlcNAc-1-P), which is converted into UDP-GlcNAc by the transfer of uridine 5-monophosphate (from uridine 5-triphosphate), a reaction catalyzed by the N-terminal domain. In Campylobacter lari (strain RM2100 / D67 / ATCC BAA-1060), this protein is Bifunctional protein GlmU.